The chain runs to 59 residues: Temporin-CDYd (59 aa).

The N-terminal stretch at 1–22 (MFTLKKSMLLLLFLGTISLTLC) is a signal peptide. Positions 23–42 (EEERDANEEEENGGEVKEEE) are excised as a propeptide.

It belongs to the frog skin active peptide (FSAP) family. Temporin subfamily. In terms of tissue distribution, expressed by the skin glands.

The protein resides in the secreted. In terms of biological role, antimicrobial peptide. The polypeptide is Temporin-CDYd (Rana dybowskii (Dybovsky's frog)).